The sequence spans 437 residues: Na(+)/H(+) antiporter NhaA (437 aa).

11 helical membrane passes run 29 to 49 (TAGI…NTAW), 74 to 94 (LKHW…ALEL), 111 to 131 (LPVA…LLLV), 139 to 159 (GWGT…ALLG), 168 to 188 (LFLL…VAVG), 196 to 216 (VALG…LLGI), 229 to 249 (IWLA…ILGL), 307 to 327 (IALH…SNAG), 341 to 361 (IAIV…FSFL), 376 to 396 (WSLL…ALFI), and 411 to 431 (LGVL…LTLL).

Belongs to the NhaA Na(+)/H(+) (TC 2.A.33) antiporter family.

The protein localises to the cell inner membrane. It carries out the reaction Na(+)(in) + 2 H(+)(out) = Na(+)(out) + 2 H(+)(in). Functionally, na(+)/H(+) antiporter that extrudes sodium in exchange for external protons. This is Na(+)/H(+) antiporter NhaA from Rhizobium meliloti (strain 1021) (Ensifer meliloti).